The following is a 262-amino-acid chain: Pyridoxine 5'-phosphate synthase (262 aa).

Asn-6 is a 3-amino-2-oxopropyl phosphate binding site. Residue 8-9 (DH) participates in 1-deoxy-D-xylulose 5-phosphate binding. Residue Arg-17 participates in 3-amino-2-oxopropyl phosphate binding. The Proton acceptor role is filled by His-43. Residues Arg-45 and His-50 each coordinate 1-deoxy-D-xylulose 5-phosphate. The Proton acceptor role is filled by Glu-70. Thr-102 is a 1-deoxy-D-xylulose 5-phosphate binding site. The active-site Proton donor is the His-215. 3-amino-2-oxopropyl phosphate-binding positions include Gly-216 and 237–238 (GH).

This sequence belongs to the PNP synthase family. Homooctamer; tetramer of dimers.

The protein resides in the cytoplasm. The enzyme catalyses 3-amino-2-oxopropyl phosphate + 1-deoxy-D-xylulose 5-phosphate = pyridoxine 5'-phosphate + phosphate + 2 H2O + H(+). The protein operates within cofactor biosynthesis; pyridoxine 5'-phosphate biosynthesis; pyridoxine 5'-phosphate from D-erythrose 4-phosphate: step 5/5. Catalyzes the complicated ring closure reaction between the two acyclic compounds 1-deoxy-D-xylulose-5-phosphate (DXP) and 3-amino-2-oxopropyl phosphate (1-amino-acetone-3-phosphate or AAP) to form pyridoxine 5'-phosphate (PNP) and inorganic phosphate. The polypeptide is Pyridoxine 5'-phosphate synthase (Helicobacter pylori (strain HPAG1)).